The primary structure comprises 130 residues: Small ribosomal subunit protein uS9 (130 aa).

The disordered stretch occupies residues 109-130 (RMKERKKYGLKAARRAPQFSKR). A compositionally biased stretch (basic residues) spans 111-130 (KERKKYGLKAARRAPQFSKR).

Belongs to the universal ribosomal protein uS9 family.

The chain is Small ribosomal subunit protein uS9 from Lachnoclostridium phytofermentans (strain ATCC 700394 / DSM 18823 / ISDg) (Clostridium phytofermentans).